The sequence spans 1175 residues: Atrophin-1 (1175 aa).

Disordered regions lie at residues 1 to 595 (MKTR…VTTS), 608 to 752 (SSPA…ARFN), and 770 to 847 (VPLE…HRPP). Residues 16-32 (RKKEAPGPREELRSRGR) carry the Nuclear localization signal motif. Over residues 17-29 (KKEAPGPREELRS) the composition is skewed to basic and acidic residues. Ser34 carries the post-translational modification Phosphoserine. Positions 45 to 63 (GKAEKSRQTAKKARIEEPS) are enriched in basic and acidic residues. Residues Ser77, Ser79, Ser101, Ser103, and Ser107 each carry the phosphoserine modification. The segment covering 108 to 128 (LDGRSINDDGSSDPRDIDQDN) has biased composition (basic and acidic residues). Residues 129 to 152 (RSTSPSIYSPGSVENDSDSSSGLS) are compositionally biased toward polar residues. Pro residues-rich tracts occupy residues 158–174 (PYHP…PPDS) and 208–217 (GPPPGAPPTH). 2 stretches are compositionally biased toward low complexity: residues 240-253 (GAAA…SGGK) and 262-273 (IPISSSGASGAP). Residues 345–374 (PPGPEKGPTLAPSPHPLPPASSSAPGPPMR) show a composition bias toward pro residues. Over residues 378-396 (SSSSSSAAASSSSSSSSAS) the composition is skewed to low complexity. A compositionally biased stretch (polar residues) spans 416-437 (SMSVSNQPPKYTQPSLPSQAVW). Positions 476 to 491 (THHHHQQQPQQQHHHG) are enriched in basic residues. An involved in binding BAIAP2 region spans residues 503-553 (HPLESSNSHHAHPYNMSPSLGSLRPYPPGPAHLPPPHGQVSYNQAGPNGPP). Over residues 527–539 (PYPPGPAHLPPPH) the composition is skewed to pro residues. The span at 547 to 584 (AGPNGPPVSSSNSSGSSSQASYSCSHPSSSQGPQGASY) shows a compositional bias: low complexity. The residue at position 617 (Ser617) is a Phosphoserine. An N6-acetyllysine modification is found at Lys626. Residue Thr638 is modified to Phosphothreonine. At Ser646 the chain carries Phosphoserine. Position 654 is a phosphothreonine (Thr654). 2 stretches are compositionally biased toward pro residues: residues 693 to 703 (LPPPPAAPTTG) and 722 to 737 (PESP…PPPK). The residue at position 724 (Ser724) is a Phosphoserine; by MAPK8. Residues Ser731 and Ser733 each carry the phosphoserine modification. Over residues 780–824 (KRADLVEKVRREAEQRAREEKEREREREREKEREREKERELERSV) the composition is skewed to basic and acidic residues. The tract at residues 864–879 (DTPALRTLSEYARPHV) is required for interaction with FAT1. Residue Ser881 is modified to Phosphoserine. The interval 913–932 (PAAREREREARERDLRDRLK) is disordered. Basic and acidic residues predominate over residues 914–932 (AAREREREARERDLRDRLK). The Nuclear export signal motif lies at 1018-1026 (ALGNDPLAR). At Arg1100 the chain carries Asymmetric dimethylarginine. Lys1168 participates in a covalent cross-link: Glycyl lysine isopeptide (Lys-Gly) (interchain with G-Cter in SUMO2).

In terms of assembly, interacts with BAIAP2, WWP1, WWP2, WWP3 and RERE. Interacts (via its N-terminus) with MTG8; the interaction enhances transcriptional repression of MTG8. Interacts with PQBP1. Interacts with NR2E1; the interaction represses the transcriptional activity of NR2E1. Interacts with FAT1 (via a C-terminal domain). In terms of processing, phosphorylated in vitro by MAPK8/JNK1 on Ser-724. Widely expressed. Most abundant in the brain.

Its subcellular location is the cytoplasm. The protein localises to the perinuclear region. The protein resides in the cell junction. It is found in the nucleus. Functionally, transcriptional corepressor. Corepressor of MTG8 transcriptional repression. Has some intrinsic repression activity which is independent of the number of the poly-Q repeats. Recruits NR2E1 to repress transcription. Promotes vascular smooth cell (VSMC) migration and orientation. In Mus musculus (Mouse), this protein is Atrophin-1 (Atn1).